The primary structure comprises 344 residues: Heat-inducible transcription repressor HrcA (344 aa).

Belongs to the HrcA family.

Its function is as follows. Negative regulator of class I heat shock genes (grpE-dnaK-dnaJ and groELS operons). Prevents heat-shock induction of these operons. This chain is Heat-inducible transcription repressor HrcA, found in Streptococcus uberis (strain ATCC BAA-854 / 0140J).